The chain runs to 435 residues: 3-phosphoshikimate 1-carboxyvinyltransferase (435 aa).

3-phosphoshikimate contacts are provided by lysine 23, serine 24, and arginine 28. Lysine 23 contacts phosphoenolpyruvate. 2 residues coordinate phosphoenolpyruvate: glycine 96 and arginine 124. 3-phosphoshikimate is bound by residues serine 167, serine 168, glutamine 169, serine 196, glutamate 311, and histidine 340. Phosphoenolpyruvate is bound at residue glutamine 169. Glutamate 311 functions as the Proton acceptor in the catalytic mechanism. Positions 344, 385, and 410 each coordinate phosphoenolpyruvate.

Belongs to the EPSP synthase family. In terms of assembly, monomer.

The protein resides in the cytoplasm. The enzyme catalyses 3-phosphoshikimate + phosphoenolpyruvate = 5-O-(1-carboxyvinyl)-3-phosphoshikimate + phosphate. It participates in metabolic intermediate biosynthesis; chorismate biosynthesis; chorismate from D-erythrose 4-phosphate and phosphoenolpyruvate: step 6/7. Functionally, catalyzes the transfer of the enolpyruvyl moiety of phosphoenolpyruvate (PEP) to the 5-hydroxyl of shikimate-3-phosphate (S3P) to produce enolpyruvyl shikimate-3-phosphate and inorganic phosphate. This is 3-phosphoshikimate 1-carboxyvinyltransferase from Mycolicibacterium paratuberculosis (strain ATCC BAA-968 / K-10) (Mycobacterium paratuberculosis).